Reading from the N-terminus, the 156-residue chain is Transcription elongation factor GreA (156 aa).

Positions 1–32 (MKKVRLTREGYEKLKKELEDLKRKFMYEISER) form a coiled coil.

This sequence belongs to the GreA/GreB family.

Its function is as follows. Necessary for efficient RNA polymerase transcription elongation past template-encoded arresting sites. The arresting sites in DNA have the property of trapping a certain fraction of elongating RNA polymerases that pass through, resulting in locked ternary complexes. Cleavage of the nascent transcript by cleavage factors such as GreA or GreB allows the resumption of elongation from the new 3'terminus. GreA releases sequences of 2 to 3 nucleotides. The sequence is that of Transcription elongation factor GreA from Thermotoga maritima (strain ATCC 43589 / DSM 3109 / JCM 10099 / NBRC 100826 / MSB8).